Consider the following 314-residue polypeptide: Carbamate kinase (314 aa).

Belongs to the carbamate kinase family. In terms of assembly, homodimer.

The protein resides in the cytoplasm. It catalyses the reaction hydrogencarbonate + NH4(+) + ATP = carbamoyl phosphate + ADP + H2O + H(+). Carbamate kinase that plays a biosynthetic role in that it produces carbamoyl-phosphate. The protein is Carbamate kinase (cpkA) of Pyrococcus furiosus (strain ATCC 43587 / DSM 3638 / JCM 8422 / Vc1).